We begin with the raw amino-acid sequence, 599 residues long: Sulfite reductase [NADPH] flavoprotein alpha-component (599 aa).

The Flavodoxin-like domain maps to 64–202 (VTLISASQTG…AASEWRARVV (139 aa)). Residues 70 to 75 (SQTGNA), 117 to 120 (STQG), and 153 to 162 (LGDTSYEFFC) contribute to the FMN site. The 215-residue stretch at 234–448 (DAPLIATLSV…IEHNDNFRLP (215 aa)) folds into the FAD-binding FR-type domain. Residues Thr-322, Ala-356, 386–389 (RLYS), 404–406 (TVG), Tyr-410, and 419–422 (GGAS) contribute to the FAD site. NADP(+) is bound by residues 519 to 520 (SR), 525 to 529 (KIYVQ), and Asp-561. An FAD-binding site is contributed by Tyr-599.

This sequence belongs to the NADPH-dependent sulphite reductase flavoprotein subunit CysJ family. The protein in the N-terminal section; belongs to the flavodoxin family. It in the C-terminal section; belongs to the flavoprotein pyridine nucleotide cytochrome reductase family. In terms of assembly, alpha(8)-beta(8). The alpha component is a flavoprotein, the beta component is a hemoprotein. FAD serves as cofactor. Requires FMN as cofactor.

The enzyme catalyses hydrogen sulfide + 3 NADP(+) + 3 H2O = sulfite + 3 NADPH + 4 H(+). It participates in sulfur metabolism; hydrogen sulfide biosynthesis; hydrogen sulfide from sulfite (NADPH route): step 1/1. Component of the sulfite reductase complex that catalyzes the 6-electron reduction of sulfite to sulfide. This is one of several activities required for the biosynthesis of L-cysteine from sulfate. The flavoprotein component catalyzes the electron flow from NADPH -&gt; FAD -&gt; FMN to the hemoprotein component. The sequence is that of Sulfite reductase [NADPH] flavoprotein alpha-component from Salmonella typhimurium (strain LT2 / SGSC1412 / ATCC 700720).